We begin with the raw amino-acid sequence, 183 residues long: Large ribosomal subunit protein uL6 (183 aa).

The protein belongs to the universal ribosomal protein uL6 family. Part of the 50S ribosomal subunit.

In terms of biological role, this protein binds to the 23S rRNA, and is important in its secondary structure. It is located near the subunit interface in the base of the L7/L12 stalk, and near the tRNA binding site of the peptidyltransferase center. The protein is Large ribosomal subunit protein uL6 of Chlamydia pneumoniae (Chlamydophila pneumoniae).